Here is a 110-residue protein sequence, read N- to C-terminus: UPF0060 membrane protein BTH_I2792 (110 aa).

4 helical membrane-spanning segments follow: residues 9–29, 34–54, 64–84, and 86–106; these read ALFV…WLVL, PVWL…LLTL, AAYG…VDGV, and LSRW…VIAL.

It belongs to the UPF0060 family.

Its subcellular location is the cell inner membrane. This Burkholderia thailandensis (strain ATCC 700388 / DSM 13276 / CCUG 48851 / CIP 106301 / E264) protein is UPF0060 membrane protein BTH_I2792.